A 252-amino-acid polypeptide reads, in one-letter code: Isoprenyl transferase (252 aa).

Residue aspartate 32 is part of the active site. Aspartate 32 provides a ligand contact to Mg(2+). Residues 33–36 (GNGR), tryptophan 37, arginine 45, histidine 49, and 77–79 (STE) each bind substrate. Asparagine 80 serves as the catalytic Proton acceptor. Substrate-binding positions include tryptophan 81, arginine 83, arginine 200, and 206 to 208 (RLS). Residue glutamate 219 participates in Mg(2+) binding.

Belongs to the UPP synthase family. Homodimer. Requires Mg(2+) as cofactor.

Its function is as follows. Catalyzes the condensation of isopentenyl diphosphate (IPP) with allylic pyrophosphates generating different type of terpenoids. This is Isoprenyl transferase from Listeria monocytogenes serovar 1/2a (strain ATCC BAA-679 / EGD-e).